The chain runs to 279 residues: Coiled-coil domain-containing protein 106 (279 aa).

Positions 62–101 form a coiled coil; it reads KAQLHMALERNSWLQKRIEDLEEERDFLRCQLDKFISSAR. Basic and acidic residues predominate over residues 109-121; the sequence is RMKPGPRRVDGDS. The interval 109–173 is disordered; sequence RMKPGPRRVD…FGKTKARERQ (65 aa). At S129 the chain carries Phosphoserine. The Bipartite nuclear localization signal motif lies at 151 to 164; the sequence is KRQKQKGSTSRKRF. The segment covering 151-167 has biased composition (basic residues); sequence KRQKQKGSTSRKRFGKT.

As to quaternary structure, interacts with p53/TP53.

The protein localises to the nucleus. Functionally, promotes the degradation of p53/TP53 protein and inhibits its transactivity. This is Coiled-coil domain-containing protein 106 (Ccdc106) from Mus musculus (Mouse).